Consider the following 599-residue polypeptide: Elongation factor 4 (599 aa).

Residues 2–185 (ENIRNFSIIA…AITKRIPPPK (184 aa)) form the tr-type G domain. GTP contacts are provided by residues 14–19 (DHGKST) and 132–135 (NKID).

This sequence belongs to the TRAFAC class translation factor GTPase superfamily. Classic translation factor GTPase family. LepA subfamily.

It is found in the cell inner membrane. It carries out the reaction GTP + H2O = GDP + phosphate + H(+). Its function is as follows. Required for accurate and efficient protein synthesis under certain stress conditions. May act as a fidelity factor of the translation reaction, by catalyzing a one-codon backward translocation of tRNAs on improperly translocated ribosomes. Back-translocation proceeds from a post-translocation (POST) complex to a pre-translocation (PRE) complex, thus giving elongation factor G a second chance to translocate the tRNAs correctly. Binds to ribosomes in a GTP-dependent manner. The protein is Elongation factor 4 of Hydrogenobaculum sp. (strain Y04AAS1).